A 416-amino-acid polypeptide reads, in one-letter code: Hepatic and glial cell adhesion molecule (416 aa).

Residues 1-33 (MKRERGALSRASRALRLAPFVYLLLIQTDPLEG) form the signal peptide. The Ig-like V-type domain occupies 34-142 (VNITSPVRLI…GEKTINLTVD (109 aa)). At 34–240 (VNITSPVRLI…VKITVYRRSS (207 aa)) the chain is on the extracellular side. N-linked (GlcNAc...) asparagine glycans are attached at residues Asn-35, Asn-138, Asn-167, and Asn-189. The Ig-like C2-type domain maps to 148–234 (PQVLVASTTV…QGRSLPVKIT (87 aa)). Residues Cys-168 and Cys-217 are joined by a disulfide bond. Residues 241–261 (LYIILSTGGIFLLVTLVTVCA) traverse the membrane as a helical segment. Residues 262–416 (CWKPSKRKQK…DEAGPVEISA (155 aa)) are Cytoplasmic-facing. Residues 273–416 (LEKQNSLEYM…DEAGPVEISA (144 aa)) form a disordered region. Ser-278 is modified (phosphoserine). Residues 285–306 (NDDRLKPEADTLPRSGEQERKN) show a composition bias toward basic and acidic residues. A phosphoserine mark is found at Ser-350 and Ser-377. The span at 383–398 (SSPGRSRSASRTLRTA) shows a compositional bias: low complexity.

Homodimer. Dimer formation occurs predominantly through cis interactions on the cell surface. Part of a complex containing MLC1, TRPV4, AQP4 and ATP1B1. Interacts with CLCN2. N-glycosylated.

It is found in the cytoplasm. The protein resides in the cell membrane. Functionally, involved in regulating cell motility and cell-matrix interactions. May inhibit cell growth through suppression of cell proliferation. In glia, associates and targets CLCN2 at astrocytic processes and myelinated fiber tracts where it may regulate transcellular chloride flux involved in neuron excitability. This chain is Hepatic and glial cell adhesion molecule, found in Homo sapiens (Human).